A 192-amino-acid chain; its full sequence is uncharacterized protein (192 aa).

One can recognise a Nudix hydrolase domain in the interval 29-160; the sequence is HRQAAVLIPI…PLDIYRRGDS (132 aa). Positions 67 to 89 match the Nudix box motif; sequence GAVDDTDASVIAAALREAEEEVA. Residues Glu83 and Glu87 each contribute to the Mg(2+) site.

The protein belongs to the Nudix hydrolase family. PCD1 subfamily. It depends on Mn(2+) as a cofactor. Mg(2+) serves as cofactor.

In terms of biological role, probably mediates the hydrolysis of some nucleoside diphosphate derivatives. This is an uncharacterized protein from Escherichia coli (strain SMS-3-5 / SECEC).